The sequence spans 504 residues: Anaerobic nitric oxide reductase transcription regulator NorR (504 aa).

Asp-57 is subject to 4-aspartylphosphate. Residues 187-416 (MIGLSPGMTQ…LEHAIHRAVV (230 aa)) form the Sigma-54 factor interaction domain. ATP is bound by residues 215 to 222 (GETGTGKE) and 278 to 287 (ADNGTLFLDE). Residues 479–498 (WAACARMLETDVANLHRLAK) constitute a DNA-binding region (H-T-H motif).

It functions in the pathway nitrogen metabolism; nitric oxide reduction. Its function is as follows. Required for the expression of anaerobic nitric oxide (NO) reductase, acts as a transcriptional activator for at least the norVW operon. Activation also requires sigma-54. The sequence is that of Anaerobic nitric oxide reductase transcription regulator NorR from Escherichia coli (strain K12 / MC4100 / BW2952).